The chain runs to 180 residues: Small ribosomal subunit protein bS16 (180 aa).

Belongs to the bacterial ribosomal protein bS16 family.

This Flavobacterium psychrophilum (strain ATCC 49511 / DSM 21280 / CIP 103535 / JIP02/86) protein is Small ribosomal subunit protein bS16.